The primary structure comprises 337 residues: Transcription initiation factor IIB (337 aa).

The TFIIB-type zinc-finger motif lies at 37 to 68; the sequence is YTVECPECGSRALVRDYERAELVCSECGLVID. Zn(2+) is bound by residues Cys-41, Cys-44, Cys-60, and Cys-63. 2 consecutive repeat copies span residues 154 to 237 and 248 to 329.

It belongs to the TFIIB family.

Functionally, stabilizes TBP binding to an archaeal box-A promoter. Also responsible for recruiting RNA polymerase II to the pre-initiation complex (DNA-TBP-TFIIB). In Methanothrix thermoacetophila (strain DSM 6194 / JCM 14653 / NBRC 101360 / PT) (Methanosaeta thermophila), this protein is Transcription initiation factor IIB.